The primary structure comprises 448 residues: Binary larvicide subunit BinB (448 aa).

Positions 1-198 are beta-trefoil domain; sequence MCDSKDNSGV…TAFVNSSFYA (198 aa). A disulfide bond links Cys-67 and Cys-161. Positions 199 to 448 are probable pore-forming domain; it reads AAIPQLPQTS…NEELIPKINQ (250 aa).

The protein belongs to the toxin_10 family. Forms a heterodimer with BinA. Upon toxin crystal solubilization with NaOH at pH 12, only the 63-kDa (binB) and 43-kDa (binA) proteins were detected. Interacts with mosquito protein Cpm1 which acts as its host receptor. In terms of processing, processed by proteases extracted from C.pipiens larval gut; unlike its partner BinA, it does not form a stable digestion product.

It is found in the spore. The protein localises to the perispore. Its function is as follows. Component of a binary toxin active against Culex and some Aedes mosquito larvae. This subunit alone has no toxic larvicidal activity. This subunit is responsible for localized binding to specific regions of the host larval gut. Binary toxin internalization into host gut cells requires both proteins. This is Binary larvicide subunit BinB (binB) from Lysinibacillus sphaericus (Bacillus sphaericus).